The sequence spans 342 residues: Oxygen-dependent coproporphyrinogen-III oxidase (342 aa).

Serine 98 provides a ligand contact to substrate. Histidine 102 and histidine 112 together coordinate a divalent metal cation. The active-site Proton donor is the histidine 112. 114–116 (NYR) is a binding site for substrate. Positions 146 and 176 each coordinate a divalent metal cation. Residues 266 to 301 (YVEFNLVWDRGTIFGLQTNGRTESILMSLPPLARWE) form an important for dimerization region.

The protein belongs to the aerobic coproporphyrinogen-III oxidase family. As to quaternary structure, homodimer. A divalent metal cation is required as a cofactor.

Its subcellular location is the cytoplasm. The enzyme catalyses coproporphyrinogen III + O2 + 2 H(+) = protoporphyrinogen IX + 2 CO2 + 2 H2O. The protein operates within porphyrin-containing compound metabolism; protoporphyrin-IX biosynthesis; protoporphyrinogen-IX from coproporphyrinogen-III (O2 route): step 1/1. Its function is as follows. Involved in the heme and chlorophyll biosynthesis. Catalyzes the aerobic oxidative decarboxylation of propionate groups of rings A and B of coproporphyrinogen-III to yield the vinyl groups in protoporphyrinogen-IX. The polypeptide is Oxygen-dependent coproporphyrinogen-III oxidase (Prochlorococcus marinus subsp. pastoris (strain CCMP1986 / NIES-2087 / MED4)).